Reading from the N-terminus, the 478-residue chain is ATP synthase subunit beta (478 aa).

Residue 151-158 (GGAGVGKT) coordinates ATP.

The protein belongs to the ATPase alpha/beta chains family. As to quaternary structure, F-type ATPases have 2 components, CF(1) - the catalytic core - and CF(0) - the membrane proton channel. CF(1) has five subunits: alpha(3), beta(3), gamma(1), delta(1), epsilon(1). CF(0) has three main subunits: a(1), b(2) and c(9-12). The alpha and beta chains form an alternating ring which encloses part of the gamma chain. CF(1) is attached to CF(0) by a central stalk formed by the gamma and epsilon chains, while a peripheral stalk is formed by the delta and b chains.

The protein resides in the cell inner membrane. The enzyme catalyses ATP + H2O + 4 H(+)(in) = ADP + phosphate + 5 H(+)(out). In terms of biological role, produces ATP from ADP in the presence of a proton gradient across the membrane. The catalytic sites are hosted primarily by the beta subunits. The sequence is that of ATP synthase subunit beta from Xanthobacter autotrophicus (strain ATCC BAA-1158 / Py2).